Reading from the N-terminus, the 154-residue chain is Ascorbate-specific PTS system EIIA component (154 aa).

Residues 6-150 form the PTS EIIA type-2 domain; sequence SLAENNSIRL…QEVLDLIDRT (145 aa). Residue His68 is the Tele-phosphohistidine intermediate of the active site. His68 is modified (phosphohistidine).

It is found in the cytoplasm. Functionally, the phosphoenolpyruvate-dependent sugar phosphotransferase system (sugar PTS), a major carbohydrate active transport system, catalyzes the phosphorylation of incoming sugar substrates concomitantly with their translocation across the cell membrane. The enzyme II UlaABC PTS system is involved in ascorbate transport. The chain is Ascorbate-specific PTS system EIIA component (ulaC) from Salmonella choleraesuis (strain SC-B67).